A 36-amino-acid polypeptide reads, in one-letter code: Cytochrome b6-f complex subunit 7 (36 aa).

Residues 1-5 lie on the Lumenal side of the membrane; that stretch reads NAAAE. Residues 6–28 form a helical membrane-spanning segment; sequence IFRIAAVMNGLTLVGVAIGFVLL. Over 29–36 the chain is Stromal; that stretch reads RIEATVEE.

The protein belongs to the PetM family. In terms of assembly, the 4 large subunits of the cytochrome b6-f complex are cytochrome b6, subunit IV (17 kDa polypeptide, PetD), cytochrome f and the Rieske protein, while the 4 small subunits are PetG, PetL, PetM and PetN. The complex functions as a dimer.

It localises to the plastid. Its subcellular location is the chloroplast thylakoid membrane. Functionally, component of the cytochrome b6-f complex, which mediates electron transfer between photosystem II (PSII) and photosystem I (PSI), cyclic electron flow around PSI, and state transitions. The polypeptide is Cytochrome b6-f complex subunit 7 (Spinacia oleracea (Spinach)).